A 119-amino-acid chain; its full sequence is Small ribosomal subunit protein uS13 (119 aa).

Residues 92-119 (RRGLPVRGQRTKTNARTRKGPRKAIRAR) are disordered.

Belongs to the universal ribosomal protein uS13 family. Part of the 30S ribosomal subunit. Forms a loose heterodimer with protein S19. Forms two bridges to the 50S subunit in the 70S ribosome.

Its function is as follows. Located at the top of the head of the 30S subunit, it contacts several helices of the 16S rRNA. In the 70S ribosome it contacts the 23S rRNA (bridge B1a) and protein L5 of the 50S subunit (bridge B1b), connecting the 2 subunits; these bridges are implicated in subunit movement. Contacts the tRNAs in the A and P-sites. The chain is Small ribosomal subunit protein uS13 from Nitrosomonas eutropha (strain DSM 101675 / C91 / Nm57).